A 155-amino-acid polypeptide reads, in one-letter code: 3-hydroxyacyl-[acyl-carrier-protein] dehydratase FabZ (155 aa).

Histidine 58 is an active-site residue.

The protein belongs to the thioester dehydratase family. FabZ subfamily.

The protein resides in the cytoplasm. The enzyme catalyses a (3R)-hydroxyacyl-[ACP] = a (2E)-enoyl-[ACP] + H2O. Functionally, involved in unsaturated fatty acids biosynthesis. Catalyzes the dehydration of short chain beta-hydroxyacyl-ACPs and long chain saturated and unsaturated beta-hydroxyacyl-ACPs. The chain is 3-hydroxyacyl-[acyl-carrier-protein] dehydratase FabZ from Rhizobium etli (strain CIAT 652).